The sequence spans 279 residues: Lactose operon transcription activator (279 aa).

Positions 174-272 constitute an HTH araC/xylS-type domain; that stretch reads QHAVDFINTN…EISASEYRHH (99 aa). DNA-binding regions (H-T-H motif) lie at residues 191–212 and 239–262; these read EDVA…KKNL and ISDI…TKHF.

Functionally, transcriptional regulator of the lacPH genes for lactose utilization. The chain is Lactose operon transcription activator (lacR) from Staphylococcus xylosus.